We begin with the raw amino-acid sequence, 365 residues long: Peptide chain release factor 1 (365 aa).

At Gln236 the chain carries N5-methylglutamine.

It belongs to the prokaryotic/mitochondrial release factor family. Methylated by PrmC. Methylation increases the termination efficiency of RF1.

It localises to the cytoplasm. Functionally, peptide chain release factor 1 directs the termination of translation in response to the peptide chain termination codons UAG and UAA. This chain is Peptide chain release factor 1, found in Latilactobacillus sakei subsp. sakei (strain 23K) (Lactobacillus sakei subsp. sakei).